A 257-amino-acid polypeptide reads, in one-letter code: Pyridoxine 5'-phosphate synthase (257 aa).

Residue N16 participates in 3-amino-2-oxopropyl phosphate binding. 18-19 lines the 1-deoxy-D-xylulose 5-phosphate pocket; it reads DH. R27 provides a ligand contact to 3-amino-2-oxopropyl phosphate. Residue H52 is the Proton acceptor of the active site. Residues R54 and H59 each contribute to the 1-deoxy-D-xylulose 5-phosphate site. The active-site Proton acceptor is the E79. T109 contributes to the 1-deoxy-D-xylulose 5-phosphate binding site. H200 serves as the catalytic Proton donor. Residues G201 and 222 to 223 each bind 3-amino-2-oxopropyl phosphate; that span reads GH.

This sequence belongs to the PNP synthase family. Homooctamer; tetramer of dimers.

It localises to the cytoplasm. The enzyme catalyses 3-amino-2-oxopropyl phosphate + 1-deoxy-D-xylulose 5-phosphate = pyridoxine 5'-phosphate + phosphate + 2 H2O + H(+). It functions in the pathway cofactor biosynthesis; pyridoxine 5'-phosphate biosynthesis; pyridoxine 5'-phosphate from D-erythrose 4-phosphate: step 5/5. In terms of biological role, catalyzes the complicated ring closure reaction between the two acyclic compounds 1-deoxy-D-xylulose-5-phosphate (DXP) and 3-amino-2-oxopropyl phosphate (1-amino-acetone-3-phosphate or AAP) to form pyridoxine 5'-phosphate (PNP) and inorganic phosphate. This is Pyridoxine 5'-phosphate synthase from Burkholderia pseudomallei (strain K96243).